We begin with the raw amino-acid sequence, 157 residues long: 2-C-methyl-D-erythritol 2,4-cyclodiphosphate synthase (157 aa).

A divalent metal cation contacts are provided by D8 and H10. 4-CDP-2-C-methyl-D-erythritol 2-phosphate is bound by residues 8–10 (DVH) and 34–35 (HS). H42 contributes to the a divalent metal cation binding site. 4-CDP-2-C-methyl-D-erythritol 2-phosphate contacts are provided by residues 56-58 (DIG), 61-65 (FPDTD), 100-106 (AQAPKML), 132-135 (TTTE), F139, and R142.

This sequence belongs to the IspF family. As to quaternary structure, homotrimer. It depends on a divalent metal cation as a cofactor.

The catalysed reaction is 4-CDP-2-C-methyl-D-erythritol 2-phosphate = 2-C-methyl-D-erythritol 2,4-cyclic diphosphate + CMP. The protein operates within isoprenoid biosynthesis; isopentenyl diphosphate biosynthesis via DXP pathway; isopentenyl diphosphate from 1-deoxy-D-xylulose 5-phosphate: step 4/6. In terms of biological role, involved in the biosynthesis of isopentenyl diphosphate (IPP) and dimethylallyl diphosphate (DMAPP), two major building blocks of isoprenoid compounds. Catalyzes the conversion of 4-diphosphocytidyl-2-C-methyl-D-erythritol 2-phosphate (CDP-ME2P) to 2-C-methyl-D-erythritol 2,4-cyclodiphosphate (ME-CPP) with a corresponding release of cytidine 5-monophosphate (CMP). The sequence is that of 2-C-methyl-D-erythritol 2,4-cyclodiphosphate synthase from Photorhabdus laumondii subsp. laumondii (strain DSM 15139 / CIP 105565 / TT01) (Photorhabdus luminescens subsp. laumondii).